The following is a 572-amino-acid chain: Probable catabolite repression protein creC (572 aa).

The interval 36–61 (HLATPPPHPSEAPVVNPNPLATVPTP) is disordered. 4 WD repeats span residues 226–266 (VSNS…ALFT), 306–347 (LANQ…DIFR), 348–387 (SYYG…IVAR), and 390–434 (GHNS…LHRP). 2 disordered regions span residues 458–486 (HRAD…SAVR) and 541–572 (NDSY…MGSL). The stretch at 506–543 (VGDDPICWLGFQEDSIMTSSLEGHIRTWDRPREGINDS) is one WD 5 repeat. Positions 549–572 (SSPAISTSAAGSGSGIADSAMGSL) are enriched in low complexity.

This sequence belongs to the WD repeat creC family. In terms of assembly, interacts with creB.

Functionally, component of the regulatory network controlling carbon source utilization through ubiquitination and deubiquitination involving creA, creB, creC, creD and acrB. Required to prevent the proteolysis of the CreB deubiquitinating enzyme in the absence of carbon catabolite repression. CreB deubiquitinating enzyme stabilized in a complex with the CreC leads to the expression of genes such as those in the proline and quinate pathways. The chain is Probable catabolite repression protein creC (creC) from Aspergillus flavus (strain ATCC 200026 / FGSC A1120 / IAM 13836 / NRRL 3357 / JCM 12722 / SRRC 167).